Consider the following 41-residue polypeptide: Large ribosomal subunit protein bL36 (41 aa).

The protein belongs to the bacterial ribosomal protein bL36 family.

The protein is Large ribosomal subunit protein bL36 of Parvibaculum lavamentivorans (strain DS-1 / DSM 13023 / NCIMB 13966).